Consider the following 375-residue polypeptide: Phospho-N-acetylmuramoyl-pentapeptide-transferase (375 aa).

Transmembrane regions (helical) follow at residues Ile2–Phe22, Ala55–Leu75, Pro82–Val102, Gly120–Pro140, Ile158–Trp178, Gly198–Gln218, Pro237–Trp257, Ile264–Phe284, Ile289–Val309, and Trp345–Ile365.

It belongs to the glycosyltransferase 4 family. MraY subfamily. Requires Mg(2+) as cofactor.

The protein resides in the cell membrane. The catalysed reaction is UDP-N-acetyl-alpha-D-muramoyl-L-alanyl-gamma-D-glutamyl-meso-2,6-diaminopimeloyl-D-alanyl-D-alanine + di-trans,octa-cis-undecaprenyl phosphate = di-trans,octa-cis-undecaprenyl diphospho-N-acetyl-alpha-D-muramoyl-L-alanyl-D-glutamyl-meso-2,6-diaminopimeloyl-D-alanyl-D-alanine + UMP. It functions in the pathway cell wall biogenesis; peptidoglycan biosynthesis. Its function is as follows. Catalyzes the initial step of the lipid cycle reactions in the biosynthesis of the cell wall peptidoglycan: transfers peptidoglycan precursor phospho-MurNAc-pentapeptide from UDP-MurNAc-pentapeptide onto the lipid carrier undecaprenyl phosphate, yielding undecaprenyl-pyrophosphoryl-MurNAc-pentapeptide, known as lipid I. The polypeptide is Phospho-N-acetylmuramoyl-pentapeptide-transferase (Micrococcus luteus (strain ATCC 4698 / DSM 20030 / JCM 1464 / CCM 169 / CCUG 5858 / IAM 1056 / NBRC 3333 / NCIMB 9278 / NCTC 2665 / VKM Ac-2230) (Micrococcus lysodeikticus)).